A 332-amino-acid chain; its full sequence is Fructose-1,6-bisphosphatase class 1 (332 aa).

Mg(2+)-binding residues include Glu89, Asp110, Leu112, and Asp113. Substrate-binding positions include 113–116 (DGSS), Asn206, Tyr239, 257–259 (YLY), and Lys269. Glu275 contacts Mg(2+).

Belongs to the FBPase class 1 family. As to quaternary structure, homotetramer. Requires Mg(2+) as cofactor.

The protein localises to the cytoplasm. It carries out the reaction beta-D-fructose 1,6-bisphosphate + H2O = beta-D-fructose 6-phosphate + phosphate. The protein operates within carbohydrate biosynthesis; gluconeogenesis. In Enterobacter sp. (strain 638), this protein is Fructose-1,6-bisphosphatase class 1.